Here is a 400-residue protein sequence, read N- to C-terminus: Enoyl-[acyl-carrier-protein] reductase [NADH] (400 aa).

Residues 48–53 (GASTGY), 74–75 (FE), 111–112 (DA), and 139–140 (LA) contribute to the NAD(+) site. Position 225 (Tyr-225) interacts with substrate. The Proton donor role is filled by Tyr-235. NAD(+) is bound by residues Lys-244 and 273–275 (VVT).

Belongs to the TER reductase family. In terms of assembly, monomer.

It catalyses the reaction a 2,3-saturated acyl-[ACP] + NAD(+) = a (2E)-enoyl-[ACP] + NADH + H(+). It functions in the pathway lipid metabolism; fatty acid biosynthesis. Involved in the final reduction of the elongation cycle of fatty acid synthesis (FAS II). Catalyzes the reduction of a carbon-carbon double bond in an enoyl moiety that is covalently linked to an acyl carrier protein (ACP). The polypeptide is Enoyl-[acyl-carrier-protein] reductase [NADH] (Burkholderia ambifaria (strain MC40-6)).